A 274-amino-acid polypeptide reads, in one-letter code: MAD2L1-binding protein (274 aa).

The interval 45 to 78 (ASEAFCPRDCMVPVVFPGPVSQEGCCQFTCELLK) is interaction with MAD2L1. Residue S102 is modified to Phosphoserine.

It belongs to the MAD2L1BP family. As to quaternary structure, interacts with MAD2L1.

The protein localises to the nucleus. It localises to the cytoplasm. Its subcellular location is the cytoskeleton. It is found in the spindle. In terms of biological role, may function to silence the spindle checkpoint and allow mitosis to proceed through anaphase by binding MAD2L1 after it has become dissociated from the MAD2L1-CDC20 complex. This is MAD2L1-binding protein (MAD2L1BP) from Homo sapiens (Human).